Consider the following 491-residue polypeptide: Glutamyl-tRNA(Gln) amidotransferase subunit A (491 aa).

Active-site charge relay system residues include Lys78 and Ser158. The active-site Acyl-ester intermediate is the Ser182.

The protein belongs to the amidase family. GatA subfamily. As to quaternary structure, heterotrimer of A, B and C subunits.

It carries out the reaction L-glutamyl-tRNA(Gln) + L-glutamine + ATP + H2O = L-glutaminyl-tRNA(Gln) + L-glutamate + ADP + phosphate + H(+). Its function is as follows. Allows the formation of correctly charged Gln-tRNA(Gln) through the transamidation of misacylated Glu-tRNA(Gln) in organisms which lack glutaminyl-tRNA synthetase. The reaction takes place in the presence of glutamine and ATP through an activated gamma-phospho-Glu-tRNA(Gln). This is Glutamyl-tRNA(Gln) amidotransferase subunit A from Nitrobacter hamburgensis (strain DSM 10229 / NCIMB 13809 / X14).